Here is a 392-residue protein sequence, read N- to C-terminus: ATP phosphoribosyltransferase regulatory subunit (392 aa).

It belongs to the class-II aminoacyl-tRNA synthetase family. HisZ subfamily. In terms of assembly, heteromultimer composed of HisG and HisZ subunits.

Its subcellular location is the cytoplasm. It functions in the pathway amino-acid biosynthesis; L-histidine biosynthesis; L-histidine from 5-phospho-alpha-D-ribose 1-diphosphate: step 1/9. Its function is as follows. Required for the first step of histidine biosynthesis. May allow the feedback regulation of ATP phosphoribosyltransferase activity by histidine. The polypeptide is ATP phosphoribosyltransferase regulatory subunit (Geobacillus sp. (strain WCH70)).